A 150-amino-acid chain; its full sequence is Viral late gene transcription factor 2 (150 aa).

The protein belongs to the orthopoxvirus VLTF-2/OPG126 family. In terms of assembly, interacts with itself. Interacts with the late transcription factors VLTF-1/OPG093.

Functionally, acts with RNA polymerase to initiate transcription from late gene promoters. This Vaccinia virus (strain Western Reserve) (VACV) protein is Viral late gene transcription factor 2 (OPG126).